We begin with the raw amino-acid sequence, 410 residues long: Tegument protein VP16 homolog (410 aa).

Residues 388-410 (PPSPSEILPGDPPRPPTCGFLTR) are disordered.

The protein belongs to the herpesviridae tegument protein VP16 protein family. Associates with the VP16-induced complex; binding to host HCFC1 activates VP16 for association with the octamer motif-binding host protein POU2F1, to form a multiprotein-DNA complex responsible for activating transcription of the viral immediate early genes.

It localises to the virion tegument. It is found in the host nucleus. In terms of biological role, transcriptional activator of immediate-early (IE) gene products (alpha genes). Acts as a key activator of lytic infection by initiating the lytic program through the assembly of the transcriptional regulatory VP16-induced complex composed of VP16 and two cellular factors, HCFC1 and POU2F 1. VP16-induced complex represents a regulatory switch: when it is on, it promotes IE-gene expression and thus lytic infection, and when it is off, it limits IE-gene transcription favoring latent infection. Functionally, may play a role in the aggregation of tegument proteins around nucleocapsids during virus morphogenesis. The protein is Tegument protein VP16 homolog of Varicella-zoster virus (strain Oka vaccine) (HHV-3).